A 959-amino-acid chain; its full sequence is Ataxin-2 homolog (959 aa).

Residues 13 to 92 (DVLSAINDMI…IVDFAYVTQE (80 aa)) enclose the Sm domain. Disordered regions lie at residues 203 to 378 (AREI…GSRV), 392 to 484 (TAPK…SVIT), 501 to 528 (PRVA…HPAM), 697 to 831 (PPQG…QHIQ), and 867 to 959 (PMQQ…QSPP). Residues 226–235 (DLDKITRQED) show a composition bias toward basic and acidic residues. Residues 246 to 260 (NNSFNQQQQQRRNPN) are compositionally biased toward low complexity. The segment covering 270–281 (RRAEGLRGDRRN) has biased composition (basic and acidic residues). Residues 282–313 (SGSSSANNSRYGAPAAAQQNYSQNQQQQQGQK) are compositionally biased toward low complexity. Composition is skewed to polar residues over residues 341–356 (RQQQ…NNNV) and 473–484 (VSVTSENDSVIT). Composition is skewed to low complexity over residues 504–528 (APAT…HPAM), 697–707 (PPQGQQQQPRY), and 715–725 (QQQQQQPQQQQ). Polar residues-rich tracts occupy residues 726–742 (FSGE…SQPT) and 756–765 (APQNGNMQAE). Over residues 766 to 788 (SSSNASHSGSTSSQSGQRSGSPP) the composition is skewed to low complexity. Over residues 789 to 798 (GAVPPPPPPQ) the composition is skewed to pro residues. 3 stretches are compositionally biased toward low complexity: residues 822–831 (MMQQQQQHIQ), 867–876 (PMQQNQHPQQ), and 902–911 (QQQQQQQQQQ). A compositionally biased stretch (polar residues) spans 912 to 922 (MHRQNSLPQQF). Residues 923–935 (QGNQGVNPSGQQS) show a composition bias toward low complexity. Over residues 948–959 (TPRDQQHSQSPP) the composition is skewed to polar residues.

It belongs to the ataxin-2 family. In terms of assembly, interacts (via C-terminus) with szy-20 (via C-terminus); the interaction is RNA independent. Interacts with pab-1. Interacts with gdi-1. In terms of tissue distribution, expressed in the central nervous system, dorsal and ventral nerve cord, intestinal lining and body-wall muscle. Expressed in the gonad.

The protein resides in the cytoplasm. It localises to the nucleus. Functionally, probable RNA-binding protein that negatively regulates the translation of targets. Functions with RNA-binding protein szy-20 to ensure embryonic cell division, and to this end, plays a role in the regulation of centrosome assembly, position and size, and in astral microtubule outgrowth and nucleation. Required for gonad development, germ cell proliferation and for the production of oocytes. Regulates whole body growth and fat accumulation in response to food availability, and this may be through the mTOR pathway, upstream of daf-15 and rheb-1. The protein is Ataxin-2 homolog of Caenorhabditis elegans.